A 211-amino-acid polypeptide reads, in one-letter code: Guanylate kinase (211 aa).

The 180-residue stretch at 5–184 (GLLIVFSGPS…AAERVKRIIE (180 aa)) folds into the Guanylate kinase-like domain. 12–19 (GPSGVGKG) contacts ATP.

It belongs to the guanylate kinase family.

It is found in the cytoplasm. The catalysed reaction is GMP + ATP = GDP + ADP. Essential for recycling GMP and indirectly, cGMP. This is Guanylate kinase from Streptococcus pyogenes serotype M3 (strain SSI-1).